Here is a 182-residue protein sequence, read N- to C-terminus: Rhodanese-like domain-containing protein 15, chloroplastic (182 aa).

A chloroplast-targeting transit peptide spans 1–65 (METTAFNTTS…TTSRGNVAAE (65 aa)). A Rhodanese domain is found at 82-182 (AQAGYRYLDV…WTENELPVEE (101 aa)). C142 acts as the Cysteine persulfide intermediate in catalysis.

It localises to the plastid. The protein localises to the chloroplast. The protein resides in the thylakoid. In Arabidopsis thaliana (Mouse-ear cress), this protein is Rhodanese-like domain-containing protein 15, chloroplastic (STR15).